We begin with the raw amino-acid sequence, 689 residues long: Methionine--tRNA ligase (689 aa).

Residues 15-25 (PYANGPIHLGH) carry the 'HIGH' region motif. Zn(2+) is bound by residues Cys-146, Cys-149, Cys-159, and Cys-162. Positions 332 to 336 (KMSKS) match the 'KMSKS' region motif. Lys-335 is a binding site for ATP. Residues 588–689 (DFAKIDLRIA…EGAQPGMRVK (102 aa)) form the tRNA-binding domain.

The protein belongs to the class-I aminoacyl-tRNA synthetase family. MetG type 1 subfamily. Homodimer. It depends on Zn(2+) as a cofactor.

It is found in the cytoplasm. It catalyses the reaction tRNA(Met) + L-methionine + ATP = L-methionyl-tRNA(Met) + AMP + diphosphate. Is required not only for elongation of protein synthesis but also for the initiation of all mRNA translation through initiator tRNA(fMet) aminoacylation. The protein is Methionine--tRNA ligase of Shewanella baltica (strain OS155 / ATCC BAA-1091).